Reading from the N-terminus, the 135-residue chain is Large ribosomal subunit protein bL19 (135 aa).

Belongs to the bacterial ribosomal protein bL19 family.

Functionally, this protein is located at the 30S-50S ribosomal subunit interface and may play a role in the structure and function of the aminoacyl-tRNA binding site. The polypeptide is Large ribosomal subunit protein bL19 (Xanthomonas axonopodis pv. citri (strain 306)).